The primary structure comprises 326 residues: Dolichyl-phosphate beta-glucosyltransferase (326 aa).

Residues 1-7 are Lumenal-facing; that stretch reads MWTCLCQ. Residues 8 to 28 form a helical membrane-spanning segment; sequence LCFYLLSTLAVAALSIAALVL. Residues 29–326 lie on the Cytoplasmic side of the membrane; the sequence is YKTKPYPNIK…RIASIQKKEK (298 aa).

It belongs to the glycosyltransferase 2 family.

The protein localises to the endoplasmic reticulum membrane. The enzyme catalyses a di-trans,poly-cis-dolichyl phosphate + UDP-alpha-D-glucose = a di-trans,poly-cis-dolichyl beta-D-glucosyl phosphate + UDP. Its pathway is protein modification; protein glycosylation. Functionally, required for normal production of N-glycosylated proteins in the endoplasmic reticulum (ER). Required for embryonic segmentation, dorsal-ventral patterning and gastrulation. Required for chitin orientation and shaping of the apical and lateral plasma membranes of epidermal cells during cuticle differentiation. Also required for correctly shaping apical membrane topology of the epithelia of other organs such as the midgut and the hindgut. This chain is Dolichyl-phosphate beta-glucosyltransferase (wol), found in Drosophila melanogaster (Fruit fly).